A 1211-amino-acid polypeptide reads, in one-letter code: Endoplasmic reticulum transmembrane helix translocase (1211 aa).

The Cytoplasmic segment spans residues 1 to 23 (MGSKALITSPDISSGQLYIKLPT). Residues 24-44 (FFHLYVWPFALFVYPYIGYVY) form a helical membrane-spanning segment. Residues 45 to 54 (QNKLYSEEVR) are Lumenal-facing. Residues 55–75 (YLTYIAVGTIHALFWLAGEWN) traverse the membrane as a helical segment. At 76 to 191 (TKVYCLMTCR…FDIPIPTFGT (116 aa)) the chain is on the cytoplasmic side. The A-domain; part 1 stretch occupies residues 155–185 (TIGTLKKSTGLTNIQSEIFLYRYGKNCFDIP). The helical transmembrane segment at 192-212 (LFKEHAVAPFFVFQIFCCVLW) threads the bilayer. Topologically, residues 213–216 (CLDD) are lumenal. The chain crosses the membrane as a helical span at residues 217–237 (YWYFSLFSMFMIIALECSVVW). Topologically, residues 238–397 (QRQRTLTEFR…EKVTANNRES (160 aa)) are cytoplasmic. The A-domain; part 2 stretch occupies residues 250–388 (SIKPYEIQVY…LVRTMVFSSE (139 aa)). A helical transmembrane segment spans residues 398–418 (LYFILFLLVFAIAASGYVWHV). Residues 419–1057 (GSKTERSRYK…KERPQAGIFN (639 aa)) lie on the Lumenal side of the membrane. A P-domain; part 1 region spans residues 464 to 493 (YIYCTEPFRIPLSGHLDICCFDKTGTLTEE). The active-site 4-aspartylphosphate intermediate is D485. 2 residues coordinate Mg(2+): D485 and T487. Residues 485-487 (DKT), F587, R644, D710, and 824-828 (DGTND) contribute to the ATP site. The N-domain stretch occupies residues 495–685 (MVVQGIAGVN…FAGFLIFTSP (191 aa)). Residues 688–845 (EDARQTVQML…HVGVALLNAS (158 aa)) are P-domain; part 2. D824 is a Mg(2+) binding site. The tract at residues 846 to 955 (EEDMLEMQER…NASDDEAPKL (110 aa)) is arm-like. The P-domain; part 3 stretch occupies residues 956-971 (KLGDASVAAPFTSKLA). The chain crosses the membrane as a helical span at residues 1058 to 1078 (TYIIGSVLGQFAIHIVTLIYI). Residues 1079 to 1100 (TRVVYLYEDPLEKVDLEETFKP) are Cytoplasmic-facing. A helical membrane pass occupies residues 1101–1121 (SLLNTAIYLLQLIQQVSTFAI). The Lumenal segment spans residues 1122–1136 (NYQGRPFREALSENK). A helical transmembrane segment spans residues 1137-1157 (GMYYGLLGIAFVAIAGVTEFS). Residues 1158–1174 (PELNAKLQLVKMAYNFQ) lie on the Cytoplasmic side of the membrane. A helical membrane pass occupies residues 1175–1195 (IQLLATMVVDYAACWIIEELM). Residues 1196-1211 (KKYFRDNKPKEIVLRN) are Lumenal-facing.

The protein belongs to the cation transport ATPase (P-type) (TC 3.A.3) family. Type V subfamily. It depends on Mg(2+) as a cofactor.

It is found in the endoplasmic reticulum membrane. It catalyses the reaction [protein]-with a C-terminal TM segment(out) + ATP + H2O = [protein]-with a C-terminal TM segment(in) + ADP + phosphate + H(+). Endoplasmic reticulum translocase required to remove mitochondrial transmembrane proteins mistargeted to the endoplasmic reticulum. Acts as a dislocase that mediates the ATP-dependent extraction of mislocalized mitochondrial transmembrane proteins from the endoplasmic reticulum membrane. Specifically binds mitochondrial tail-anchored transmembrane proteins: has an atypically large substrate-binding pocket that recognizes and binds moderately hydrophobic transmembranes with short hydrophilic lumenal domains. Involved in controlling nuclear calcium ion levels. Required for cytokinesis and stabilizing microtubules. Required for assembly of the forespore membrane. Involved in calcium transport to the endoplasmic reticulum. This is Endoplasmic reticulum transmembrane helix translocase from Schizosaccharomyces pombe (strain 972 / ATCC 24843) (Fission yeast).